The sequence spans 458 residues: Sugar transporter ERD6-like 10 (458 aa).

Transmembrane regions (helical) follow at residues 17–37, 66–86, 96–116, 119–139, 150–170, 174–194, 257–277, 292–312, 319–339, 350–370, 393–413, and 419–439; these read ITACVILSTFVAVCSSFSYGC, FLNLGGAVGALFSGQLAVILG, LFCIFGWLSIAFAKNVLWLDL, ISLGIGVGLTSYVVPVYIAEI, ASTLLLQNSGISLIYFFGTVI, VLAVIGALPCFIPVIGIYFIP, LVVGIGLMLIQQLSGASGITY, LGSMIFGVFVIPKALVGLILV, PLLLASAVGMSIGSLLIGVSF, FIPVFVFINILVYFGFFAIGI, IVALTSWTTGWFVSYGFNFMF, and GTFYIFAMVGGLSLLFIWMLV.

Belongs to the major facilitator superfamily. Sugar transporter (TC 2.A.1.1) family.

It is found in the membrane. In terms of biological role, sugar transporter. In Arabidopsis thaliana (Mouse-ear cress), this protein is Sugar transporter ERD6-like 10.